Reading from the N-terminus, the 123-residue chain is Large ribosomal subunit protein uL14 (123 aa).

It belongs to the universal ribosomal protein uL14 family. As to quaternary structure, part of the 50S ribosomal subunit. Forms a cluster with proteins L3 and L19. In the 70S ribosome, L14 and L19 interact and together make contacts with the 16S rRNA in bridges B5 and B8.

Its function is as follows. Binds to 23S rRNA. Forms part of two intersubunit bridges in the 70S ribosome. The chain is Large ribosomal subunit protein uL14 from Chromohalobacter salexigens (strain ATCC BAA-138 / DSM 3043 / CIP 106854 / NCIMB 13768 / 1H11).